We begin with the raw amino-acid sequence, 122 residues long: Large ribosomal subunit protein bL12 (122 aa).

This sequence belongs to the bacterial ribosomal protein bL12 family. As to quaternary structure, homodimer. Part of the ribosomal stalk of the 50S ribosomal subunit. Forms a multimeric L10(L12)X complex, where L10 forms an elongated spine to which 2 to 4 L12 dimers bind in a sequential fashion. Binds GTP-bound translation factors.

In terms of biological role, forms part of the ribosomal stalk which helps the ribosome interact with GTP-bound translation factors. Is thus essential for accurate translation. This is Large ribosomal subunit protein bL12 from Sodalis glossinidius (strain morsitans).